The sequence spans 210 residues: Thymidylate kinase (210 aa).

10–17 (GGEGAGKS) contacts ATP.

The protein belongs to the thymidylate kinase family.

It carries out the reaction dTMP + ATP = dTDP + ADP. In terms of biological role, phosphorylation of dTMP to form dTDP in both de novo and salvage pathways of dTTP synthesis. This Magnetococcus marinus (strain ATCC BAA-1437 / JCM 17883 / MC-1) protein is Thymidylate kinase.